A 116-amino-acid chain; its full sequence is MRHRCKVPQLGLPADQRKALLRSLATQLILHGQITTTLAKAKAVRAEVDHIITLAKDGSLSARRQAMGYIYDKQLVHALFEGAQARYGNRNGGYTRVVRTLRRRGDNAPMAIIELM.

The protein belongs to the bacterial ribosomal protein bL17 family. Part of the 50S ribosomal subunit. Contacts protein L32.

The protein is Large ribosomal subunit protein bL17 of Microcystis aeruginosa (strain NIES-843 / IAM M-2473).